The following is a 230-amino-acid chain: Enolase-phosphatase E1 (230 aa).

The protein belongs to the HAD-like hydrolase superfamily. MasA/MtnC family. Monomer. It depends on Mg(2+) as a cofactor.

It carries out the reaction 5-methylsulfanyl-2,3-dioxopentyl phosphate + H2O = 1,2-dihydroxy-5-(methylsulfanyl)pent-1-en-3-one + phosphate. Its pathway is amino-acid biosynthesis; L-methionine biosynthesis via salvage pathway; L-methionine from S-methyl-5-thio-alpha-D-ribose 1-phosphate: step 3/6. The protein operates within amino-acid biosynthesis; L-methionine biosynthesis via salvage pathway; L-methionine from S-methyl-5-thio-alpha-D-ribose 1-phosphate: step 4/6. Bifunctional enzyme that catalyzes the enolization of 2,3-diketo-5-methylthiopentyl-1-phosphate (DK-MTP-1-P) into the intermediate 2-hydroxy-3-keto-5-methylthiopentenyl-1-phosphate (HK-MTPenyl-1-P), which is then dephosphorylated to form the acireductone 1,2-dihydroxy-3-keto-5-methylthiopentene (DHK-MTPene). This Sulfurihydrogenibium sp. (strain YO3AOP1) protein is Enolase-phosphatase E1.